The sequence spans 123 residues: Con-ikot-ikot (123 aa).

The first 18 residues, methionine 1–alanine 18, serve as a signal peptide directing secretion. The propeptide occupies alanine 19–arginine 37. Disulfide bonds link cysteine 49–cysteine 80, cysteine 50–cysteine 89, cysteine 57–cysteine 72, cysteine 90–cysteine 118, and cysteine 96–cysteine 113.

As to quaternary structure, homodimer; disulfide-linked. Expressed by the venom duct.

The protein localises to the secreted. Functionally, potently and selectively blocks the desensitization of ionotropic glutamate AMPA receptors (GRIA1, GRIA2, GRIA3 and GRIA4). Binds to a different site than does the drug cyclothiazide. The toxin acts like a straitjacket on the 'gating ring' of the ligand-binding domain (LBD) of the receptor. It does so by restraining the domains via both intra- and interdimer cross-links such that agonist-induced closure of the LBD 'clamshells' is transduced into an irislike expansion of the gating ring. Compared to other desensitization blockers, it is a poor stabilizer of the open channel because toxin-bound AMPA receptors undergo frequent brief closures. In vitro, application of the toxin to hippocampal slices causes a large and rapid increase in resting AMPA receptor-mediated current leading to neuronal death. This Conus striatus (Striated cone) protein is Con-ikot-ikot.